Consider the following 282-residue polypeptide: Undecaprenyl-diphosphatase (282 aa).

A run of 5 helical transmembrane segments spans residues 96–116 (WMVI…KDII), 123–143 (MWIT…AEKW), 198–218 (FLLA…DAFA), 229–249 (QLAV…AWLL), and 260–280 (FAAY…TGML).

Belongs to the UppP family.

The protein localises to the cell membrane. The catalysed reaction is di-trans,octa-cis-undecaprenyl diphosphate + H2O = di-trans,octa-cis-undecaprenyl phosphate + phosphate + H(+). Functionally, catalyzes the dephosphorylation of undecaprenyl diphosphate (UPP). Confers resistance to bacitracin. The protein is Undecaprenyl-diphosphatase of Corynebacterium diphtheriae (strain ATCC 700971 / NCTC 13129 / Biotype gravis).